The chain runs to 472 residues: Eukaryotic translation initiation factor 2 subunit 3 (472 aa).

Ala-2 is modified (N-acetylalanine). Residue Ser-16 is modified to Phosphoserine. The tr-type G domain occupies 39–248 (QATINIGTIG…IVKKIPVPPR (210 aa)). A G1 region spans residues 48–55 (GHVAHGKS). Residue 51–56 (AHGKST) coordinates GTP. The interval 76–80 (NITIK) is G2. The G3 stretch occupies residues 134–137 (DCPG). Residues 190–193 (NKID) and 225–227 (SAQ) each bind GTP. Residues 190–193 (NKID) are G4. The interval 225 to 227 (SAQ) is G5. Residues 457 to 469 (GQIRRGVTIKPTV) form an interacts with CDC123 region.

It belongs to the TRAFAC class translation factor GTPase superfamily. Classic translation factor GTPase family. EIF2G subfamily. Eukaryotic translation initiation factor 2 eIF2 is a heterotrimeric complex composed of an alpha (EIF2S1), a beta (EIF2S2) and a gamma (EIF2S3) chain. eIF2 is member of the 43S pre-initiation complex (43S PIC). Interacts (via C-terminus) with CDC123; the interaction is direct.

The protein resides in the cytoplasm. The protein localises to the cytosol. The enzyme catalyses GTP + H2O = GDP + phosphate + H(+). Member of the eIF2 complex that functions in the early steps of protein synthesis by forming a ternary complex with GTP and initiator tRNA. This complex binds to a 40S ribosomal subunit, followed by mRNA binding to form the 43S pre-initiation complex (43S PIC). Junction of the 60S ribosomal subunit to form the 80S initiation complex is preceded by hydrolysis of the GTP bound to eIF2 and release of an eIF2-GDP binary complex. In order for eIF2 to recycle and catalyze another round of initiation, the GDP bound to eIF2 must exchange with GTP by way of a reaction catalyzed by eIF-2B. In Bos taurus (Bovine), this protein is Eukaryotic translation initiation factor 2 subunit 3 (EIF2S3).